Consider the following 162-residue polypeptide: NADH-quinone oxidoreductase subunit I (162 aa).

2 consecutive 4Fe-4S ferredoxin-type domains span residues 54-83 and 93-122; these read RRYE…IESE and TRYD…ETQI. Positions 63, 66, 69, 73, 102, 105, 108, and 112 each coordinate [4Fe-4S] cluster.

Belongs to the complex I 23 kDa subunit family. In terms of assembly, NDH-1 is composed of 14 different subunits. Subunits NuoA, H, J, K, L, M, N constitute the membrane sector of the complex. [4Fe-4S] cluster is required as a cofactor.

Its subcellular location is the cell inner membrane. It catalyses the reaction a quinone + NADH + 5 H(+)(in) = a quinol + NAD(+) + 4 H(+)(out). In terms of biological role, NDH-1 shuttles electrons from NADH, via FMN and iron-sulfur (Fe-S) centers, to quinones in the respiratory chain. The immediate electron acceptor for the enzyme in this species is believed to be ubiquinone. Couples the redox reaction to proton translocation (for every two electrons transferred, four hydrogen ions are translocated across the cytoplasmic membrane), and thus conserves the redox energy in a proton gradient. This is NADH-quinone oxidoreductase subunit I from Burkholderia pseudomallei (strain 668).